Here is a 311-residue protein sequence, read N- to C-terminus: Homeobox protein knotted-1-like 10 (311 aa).

2 disordered regions span residues 1-45 (MEDL…PATT) and 153-184 (LCGG…DAAD). Residues 12 to 22 (SRGGGGGGGGA) show a composition bias toward gly residues. The ELK domain maps to 197-217 (ELKEMLLKKYSGCLSRLRSEF). A DNA-binding region (homeobox; TALE-type) is located at residues 218–281 (LKKRKKGKLP…NQRKRHWKPS (64 aa)).

It belongs to the TALE/KNOX homeobox family.

The protein resides in the nucleus. Its function is as follows. Probable transcription factor that may be involved in shoot formation during embryogenesis. In Oryza sativa subsp. indica (Rice), this protein is Homeobox protein knotted-1-like 10 (OSH71).